The following is a 184-amino-acid chain: dITP/XTP pyrophosphatase (184 aa).

Residue 8–13 participates in substrate binding; the sequence is TGNKGK. Mg(2+)-binding residues include E37 and D66. D66 serves as the catalytic Proton acceptor. Residues S67, 142–145, K163, and 168–169 each bind substrate; these read FGYD and HR.

The protein belongs to the HAM1 NTPase family. Homodimer. Requires Mg(2+) as cofactor.

The enzyme catalyses XTP + H2O = XMP + diphosphate + H(+). The catalysed reaction is dITP + H2O = dIMP + diphosphate + H(+). It carries out the reaction ITP + H2O = IMP + diphosphate + H(+). Functionally, pyrophosphatase that catalyzes the hydrolysis of nucleoside triphosphates to their monophosphate derivatives, with a high preference for the non-canonical purine nucleotides XTP (xanthosine triphosphate), dITP (deoxyinosine triphosphate) and ITP. Seems to function as a house-cleaning enzyme that removes non-canonical purine nucleotides from the nucleotide pool, thus preventing their incorporation into DNA/RNA and avoiding chromosomal lesions. The sequence is that of dITP/XTP pyrophosphatase from Methanosarcina acetivorans (strain ATCC 35395 / DSM 2834 / JCM 12185 / C2A).